A 189-amino-acid chain; its full sequence is Segregation and condensation protein B (189 aa).

Belongs to the ScpB family. In terms of assembly, homodimer. Homodimerization may be required to stabilize the binding of ScpA to the Smc head domains. Component of a cohesin-like complex composed of ScpA, ScpB and the Smc homodimer, in which ScpA and ScpB bind to the head domain of Smc. The presence of the three proteins is required for the association of the complex with DNA.

The protein resides in the cytoplasm. Functionally, participates in chromosomal partition during cell division. May act via the formation of a condensin-like complex containing Smc and ScpA that pull DNA away from mid-cell into both cell halves. This Streptococcus mitis protein is Segregation and condensation protein B.